Consider the following 406-residue polypeptide: RNA exonuclease 4 (406 aa).

Over residues 1–10 the composition is skewed to polar residues; that stretch reads MAPELSSNWK. Disordered regions lie at residues 1–108 and 156–181; these read MAPE…TLPS and AGLT…PTDL. Composition is skewed to low complexity over residues 54 to 64, 72 to 82, and 94 to 108; these read SQQQQQASNPS, SQTQSQPSSQK, and SKPT…TLPS. A compositionally biased stretch (polar residues) spans 162–173; sequence GHSSSSPKSNKN. In terms of domain architecture, Exonuclease spans 216–367; sequence YLSIDCEMVG…EDARVAMLLF (152 aa). Residues 377 to 387 show a composition bias toward basic and acidic residues; the sequence is ENSNRYEEGQA. Residues 377 to 406 form a disordered region; sequence ENSNRYEEGQAKKGGNGGGGGGGKKKKGKK. Over residues 388-398 the composition is skewed to gly residues; the sequence is KKGGNGGGGGG.

The protein belongs to the REXO4 family.

The protein resides in the nucleus. Functionally, exoribonuclease involved in ribosome biosynthesis. Involved in the processing of ITS1, the internal transcribed spacer localized between the 18S and 5.8S rRNAs. The polypeptide is RNA exonuclease 4 (rex-4) (Neurospora crassa (strain ATCC 24698 / 74-OR23-1A / CBS 708.71 / DSM 1257 / FGSC 987)).